Consider the following 343-residue polypeptide: Aspartate-semialdehyde dehydrogenase (343 aa).

11 to 14 (TGMV) serves as a coordination point for NADP(+). R109 lines the phosphate pocket. The Acyl-thioester intermediate role is filled by C148. Q174 provides a ligand contact to substrate. 177-178 (SG) contributes to the NADP(+) binding site. Position 200 (E200) interacts with substrate. A phosphate-binding site is contributed by K203. R233 is a substrate binding site. H240 functions as the Proton acceptor in the catalytic mechanism. 321–322 (NT) is a binding site for NADP(+).

It belongs to the aspartate-semialdehyde dehydrogenase family. In terms of assembly, homodimer.

The enzyme catalyses L-aspartate 4-semialdehyde + phosphate + NADP(+) = 4-phospho-L-aspartate + NADPH + H(+). It participates in amino-acid biosynthesis; L-lysine biosynthesis via DAP pathway; (S)-tetrahydrodipicolinate from L-aspartate: step 2/4. It functions in the pathway amino-acid biosynthesis; L-methionine biosynthesis via de novo pathway; L-homoserine from L-aspartate: step 2/3. Its pathway is amino-acid biosynthesis; L-threonine biosynthesis; L-threonine from L-aspartate: step 2/5. Functionally, catalyzes the NADPH-dependent formation of L-aspartate-semialdehyde (L-ASA) by the reductive dephosphorylation of L-aspartyl-4-phosphate. The protein is Aspartate-semialdehyde dehydrogenase of Archaeoglobus fulgidus (strain ATCC 49558 / DSM 4304 / JCM 9628 / NBRC 100126 / VC-16).